The primary structure comprises 574 residues: Ankyrin repeat protein B19 (574 aa).

ANK repeat units follow at residues 56–87 (TGYTALHCYLYNNYFTNDVLKILLNHGVDVTM), 135–164 (IKSRYMLLKEEDIDENIVSTLLDKGIDPNF), 167–213 (DGYT…NLNA), 217–249 (CGNTPFHLYLSIEMCNNIHMTKMLLTFNPNFEI), 253–285 (HGLTPILCYITSDYIQHDILVMLIHHYETNVGE), and 327–356 (EGKTLLHVACEYNNTHVIDYLIRINGDINA). Residues 541-574 (NCLLTLLPSEIIYEILYMLTINDLYNISYPPTKV) form the F-box domain.

It belongs to the poxvirinae B18 protein family.

This Vaccinia virus (strain Western Reserve) (VACV) protein is Ankyrin repeat protein B19.